A 158-amino-acid polypeptide reads, in one-letter code: Endolysin (158 aa).

E19 is a catalytic residue.

The protein belongs to the glycosyl hydrolase 24 family. Monomer.

It is found in the host cytoplasm. It carries out the reaction Endolytic cleavage of the (1-&gt;4)-beta-glycosidic linkage between N-acetylmuramic acid (MurNAc) and N-acetylglucosamine (GlcNAc) residues in peptidoglycan with concomitant formation of a 1,6-anhydrobond in the MurNAc residue.. Inactivated by zinc. Functionally, endolysin with transglycosylase activity that degrades host peptidoglycans and participates with the holin and spanin proteins in the sequential events which lead to the programmed host cell lysis releasing the mature viral particles. Once the holin has permeabilized the host cell membrane, the endolysin can reach the periplasm and break down the peptidoglycan layer. This is Endolysin (R) from Escherichia coli (Bacteriophage lambda).